Reading from the N-terminus, the 49-residue chain is Large ribosomal subunit protein bL33 (49 aa).

The protein belongs to the bacterial ribosomal protein bL33 family.

This chain is Large ribosomal subunit protein bL33 (rpmG), found in Thermotoga maritima (strain ATCC 43589 / DSM 3109 / JCM 10099 / NBRC 100826 / MSB8).